We begin with the raw amino-acid sequence, 245 residues long: MNVTLLIPARYGSSRFPGKPLAPINGKPMIQHVYERASLAKGLTNIYVATDDDRIKAAVEGFGGKVVMTSPDAASGTDRINDAINQLGLKDDDLVINLQGDQPLIDPTSIEQVISLFERHPGEFEMATLGFEIVNKAELDDPMHVKMVFDNNNYALYFSRSRIPFGRDTQDYPVYKHLGVYAYTRKFVQAFAALPLGRLEDLEKLEQLRALEYGHKIKIAISAFDSIEVDTPEDIRKCEQRLAVD.

This sequence belongs to the KdsB family.

It is found in the cytoplasm. It catalyses the reaction 8-amino-3,8-dideoxy-alpha-D-manno-octulosonate + CTP = CMP-8-amino-3,8-dideoxy-alpha-D-manno-oct-2-ulosonate + diphosphate. The protein operates within bacterial outer membrane biogenesis; lipopolysaccharide biosynthesis. Its function is as follows. Activates KDO8N (a required 8-carbon sugar) for incorporation into bacterial lipopolysaccharide in the Shewanella genus. This is 8-amino-3,8-dideoxy-manno-octulosonate cytidylyltransferase from Shewanella baltica (strain OS195).